A 283-amino-acid chain; its full sequence is MAYSLWNDQIVEEGSITISPEDRGYQFGDGIYEVIKVYNGHMFTAQEHIDRFYASAEKIRLVIPYTKDVLHKLLHDLIEKNNLNTGHVYFQITRGTTSRNHIFPDASVPAVLTGNVKTGERSIENFEKGVKATLVEDVRWLRCDIKSLNLLGAVLAKQEASEKGCYEAILHRGDIITECSSANVYGIKDGKLYTHPANNYILNGITRQVILKCAAEINLPVIEEPMTKGDLLTMDEIIVSSVSSEVTPVIDVDGQQIGAGVPGEWTRKLQKAFEAKLPISINA.

A substrate-binding site is contributed by Y32. Residue R51 coordinates pyridoxal 5'-phosphate. The substrate site is built by R99 and H101. Residue K146 is the Proton acceptor of the active site. K146 carries the N6-(pyridoxal phosphate)lysine modification. E178 serves as a coordination point for pyridoxal 5'-phosphate.

It belongs to the class-IV pyridoxal-phosphate-dependent aminotransferase family. In terms of assembly, homodimer. The cofactor is pyridoxal 5'-phosphate.

It carries out the reaction D-alanine + 2-oxoglutarate = D-glutamate + pyruvate. In terms of biological role, acts on the D-isomers of alanine, leucine, aspartate, glutamate, aminobutyrate, norvaline and asparagine. The enzyme transfers an amino group from a substrate D-amino acid to the pyridoxal phosphate cofactor to form pyridoxamine and an alpha-keto acid in the first half-reaction. The second half-reaction is the reverse of the first, transferring the amino group from the pyridoxamine to a second alpha-keto acid to form the product D-amino acid via a ping-pong mechanism. This is an important process in the formation of D-alanine and D-glutamate, which are essential bacterial cell wall components. The polypeptide is D-alanine aminotransferase (dat) (Lysinibacillus sphaericus (Bacillus sphaericus)).